Here is a 395-residue protein sequence, read N- to C-terminus: MVIIRAKQLVTALNMPWRYRDEVAVINDAAVVIRDGVIIDVGTWEEIKRRHPHANIWDFGDNLITPGLVDPHTHLLFAGSREDELERKLQGESYEEITRKGGGIYKTVKYTKETSDQELLNILQKRIQLATSFGTTTVEVKTGYGLDIDQELRLARILKSVKSPIDVVTTFLVHIPPPAGRENYVKEVLKAIPHAGTTYVDVFCDSIAFNVEETRTILKKAAEAGYKLRLHADELEYIGCSDLVEELPIDSADHLLNTPPENVRKIAKSGTVATLLPVTILTLRTSKKPPIDEMRRLRVPIAIGTDFSPNSWCLNMQTAIELAVYLLGLTPLEALIAATANAAYSLRLTDRGIIQPGKIADLVIWDVPNYHWLAYEIGRNKAKLVLKKGEPLRFL.

Fe(3+) is bound by residues H72 and H74. Zn(2+) contacts are provided by H72 and H74. The 4-imidazolone-5-propanoate site is built by R81, Y144, and H174. Y144 is an N-formimidoyl-L-glutamate binding site. H231 provides a ligand contact to Fe(3+). H231 is a Zn(2+) binding site. Residue E234 coordinates 4-imidazolone-5-propanoate. D306 is a Fe(3+) binding site. A Zn(2+)-binding site is contributed by D306.

This sequence belongs to the metallo-dependent hydrolases superfamily. HutI family. The cofactor is Zn(2+). Fe(3+) is required as a cofactor.

The protein localises to the cytoplasm. It catalyses the reaction 4-imidazolone-5-propanoate + H2O = N-formimidoyl-L-glutamate. Its pathway is amino-acid degradation; L-histidine degradation into L-glutamate; N-formimidoyl-L-glutamate from L-histidine: step 3/3. Functionally, catalyzes the hydrolytic cleavage of the carbon-nitrogen bond in imidazolone-5-propanoate to yield N-formimidoyl-L-glutamate. It is the third step in the universal histidine degradation pathway. The chain is Imidazolonepropionase from Pyrobaculum arsenaticum (strain DSM 13514 / JCM 11321 / PZ6).